A 222-amino-acid chain; its full sequence is Probable transaldolase (222 aa).

Lys91 serves as the catalytic Schiff-base intermediate with substrate.

The protein belongs to the transaldolase family. Type 3B subfamily.

It is found in the cytoplasm. The enzyme catalyses D-sedoheptulose 7-phosphate + D-glyceraldehyde 3-phosphate = D-erythrose 4-phosphate + beta-D-fructose 6-phosphate. It participates in carbohydrate degradation; pentose phosphate pathway; D-glyceraldehyde 3-phosphate and beta-D-fructose 6-phosphate from D-ribose 5-phosphate and D-xylulose 5-phosphate (non-oxidative stage): step 2/3. Transaldolase is important for the balance of metabolites in the pentose-phosphate pathway. The polypeptide is Probable transaldolase (Pelodictyon phaeoclathratiforme (strain DSM 5477 / BU-1)).